A 666-amino-acid polypeptide reads, in one-letter code: Endogenous retrovirus group K member 21 Gag polyprotein (666 aa).

Gly2 is lipidated: N-myristoyl glycine. Disordered stretches follow at residues 165–189 (GKGP…AGQV) and 217–264 (ELQY…GSEL). Residues 232 to 247 (GMPPAPQGRAPYPQPP) are compositionally biased toward pro residues. 2 CCHC-type zinc fingers span residues 544 to 561 (GKCY…NCPV) and 580 to 597 (DLCP…QCRS). The tract at residues 598–641 (KFDKNGQPLSGNEQRGQPQAPQQTGAFPIQPFVPQGFQGQQPPL) is disordered. The span at 604-622 (QPLSGNEQRGQPQAPQQTG) shows a compositional bias: polar residues. Positions 624–640 (FPIQPFVPQGFQGQQPP) are enriched in low complexity.

This sequence belongs to the beta type-B retroviral Gag protein family. HERV class-II K(HML-2) gag subfamily. In terms of processing, myristoylation is essential for retroviral assembly. Alteration of the glycine residue leads to a block in the budding of particles and an accumulation of Gag inside the cell. Specific enzymatic cleavages may yield mature proteins.

The protein resides in the cell membrane. Its function is as follows. The products of the Gag polyproteins of infectious retroviruses perform highly complex orchestrated tasks during the assembly, budding, maturation, and infection stages of the viral replication cycle. During viral assembly, the proteins form membrane associations and self-associations that ultimately result in budding of an immature virion from the infected cell. Gag precursors also function during viral assembly to selectively bind and package two plus strands of genomic RNA. Endogenous Gag proteins may have kept, lost or modified their original function during evolution. This Homo sapiens (Human) protein is Endogenous retrovirus group K member 21 Gag polyprotein (ERVK-21).